The following is a 206-amino-acid chain: 21.9 kDa heat shock protein (206 aa).

The first 29 residues, 1–29, serve as a signal peptide directing secretion; that stretch reads MAAVAEREVLGMVAAVAAMVVMMAPPAAA. The 123-residue stretch at 65-187 folds into the sHSP domain; it reads EPAAVALARC…GREPRVVAID (123 aa). The Cell attachment site motif lies at 94–96; the sequence is RGD.

The protein belongs to the small heat shock protein (HSP20) family. As to quaternary structure, may form oligomeric structures.

The protein localises to the endoplasmic reticulum. This is 21.9 kDa heat shock protein (HSP21.9) from Oryza sativa subsp. japonica (Rice).